Consider the following 386-residue polypeptide: MSTDTSGVGVREIDAGALPTRYARGWHCLGVAKDYLEGKPHGVEAFGTKLVVFADSHGDLKVLDGYCRHMGGDLSEGTVKGDEVACPFHDWRWGGDGRCKLVPYARRTPRMARTRSWTTDVRSGLLFVWHDHEGNPPDPAVRIPEIPEAASDEWTDWRWNRILIEGSNCRDIIDNVTDMAHFFYIHFGLPTYFKNVFEGHIASQYLHNVGRPDVDDLGTSYGEAHLDSEASYFGPSFMINWLHNRYGNYKSESILINCHYPVTQNSFVLQWGVIVEKPKGMSEEMTDKLSRVFTEGVSKGFLQDVEIWKHKTRIDNPLLVEEDGAVYQLRRWYEQFYVDVADIKPEMVERFEIEVDTKRANEFWNAEVEKNLKSREVSDDVPAEQH.

The Rieske domain maps to tryptophan 26–valine 128. [2Fe-2S] cluster-binding residues include cysteine 67, histidine 69, cysteine 86, and histidine 89. The Fe cation site is built by asparagine 175, histidine 181, histidine 186, and aspartate 304.

In terms of assembly, homotrimer. The two-component system 3-ketosteroid-9-alpha-monooxygenase is composed of an oxygenase component KshA and a reductase component KshB. The cofactor is [2Fe-2S] cluster. Fe cation is required as a cofactor.

The catalysed reaction is androsta-1,4-diene-3,17-dione + 2 reduced [2Fe-2S]-[ferredoxin] + O2 + 2 H(+) = 9alpha-hydroxyandrosta-1,4-diene-3,17-dione + 2 oxidized [2Fe-2S]-[ferredoxin] + H2O. It carries out the reaction androst-4-ene-3,17-dione + NADH + O2 + H(+) = 9alpha-hydroxy-androst-4-ene-3,17-dione + NAD(+) + H2O. The enzyme catalyses 3-oxochol-4-en-22-oate + NADH + O2 + H(+) = 9alpha-hydroxy-3-oxochol-4-en-22-oate + NAD(+) + H2O. It catalyses the reaction 3-oxochola-1,4-dien-22-oate + NADH + O2 + H(+) = 9alpha-hydroxy-3-oxochola-1,4-dien-22-oate + NAD(+) + H2O. The catalysed reaction is 3-oxochol-4-en-22-oyl-CoA + NADH + O2 + H(+) = 9alpha-hydroxy-3-oxochol-4-en-22-oyl-CoA + NAD(+) + H2O. It carries out the reaction 3-oxochola-1,4-dien-22-oyl-CoA + NADH + O2 + H(+) = 9alpha-hydroxy-3-oxochola-1,4-dien-22-oyl-CoA + NAD(+) + H2O. The protein operates within lipid metabolism; steroid biosynthesis. In terms of biological role, involved in the degradation of cholesterol. Catalyzes the introduction of a 9a-hydroxyl moiety into 1,4-androstadiene-3,17-dione (ADD) to yield the 9alpha-hydroxy-1,4-androstadiene-3,17-dione (9OHADD) intermediate which spontaneously form 3-hydroxy-9,10-seconandrost-1,3,5(10)-triene-9,17-dione (HSA) via the meta-cleavage of ring B with concomitant aromatization of ring A. KSH is also able to use 4-androstene-3,17-dione (AD), 3-oxo-23,24-bisnorcholesta-4-en-22-oate (4-BNC), 3-oxo-23,24-bisnorcholesta-1,4-dien-22-oate (1,4-BNC), 3-oxo-23,24-bisnorcholesta-4-en-22-oyl-coenzyme A thioester (4-BNC-CoA) and 3-oxo-23,24-bisnorcholesta-1,4-dien-22-oyl-coenzyme A thioester (1,4-BNC-CoA) as substrates. In Mycobacterium tuberculosis (strain ATCC 25618 / H37Rv), this protein is 3-ketosteroid-9-alpha-monooxygenase, oxygenase component (kshA).